A 501-amino-acid chain; its full sequence is ATP synthase subunit alpha (501 aa).

Residue 169-176 (GDRQTGKT) coordinates ATP.

Belongs to the ATPase alpha/beta chains family. F-type ATPases have 2 components, CF(1) - the catalytic core - and CF(0) - the membrane proton channel. CF(1) has five subunits: alpha(3), beta(3), gamma(1), delta(1), epsilon(1). CF(0) has three main subunits: a(1), b(2) and c(9-12). The alpha and beta chains form an alternating ring which encloses part of the gamma chain. CF(1) is attached to CF(0) by a central stalk formed by the gamma and epsilon chains, while a peripheral stalk is formed by the delta and b chains.

The protein localises to the cell membrane. It catalyses the reaction ATP + H2O + 4 H(+)(in) = ADP + phosphate + 5 H(+)(out). Its function is as follows. Produces ATP from ADP in the presence of a proton gradient across the membrane. The alpha chain is a regulatory subunit. This is ATP synthase subunit alpha from Streptococcus thermophilus (strain CNRZ 1066).